Reading from the N-terminus, the 885-residue chain is Leucine--tRNA ligase (885 aa).

Positions P48–H58 match the 'HIGH' region motif. The 'KMSKS' region motif lies at T639 to S643. K642 is an ATP binding site.

The protein belongs to the class-I aminoacyl-tRNA synthetase family.

It localises to the cytoplasm. The enzyme catalyses tRNA(Leu) + L-leucine + ATP = L-leucyl-tRNA(Leu) + AMP + diphosphate. The polypeptide is Leucine--tRNA ligase (Bordetella petrii (strain ATCC BAA-461 / DSM 12804 / CCUG 43448)).